The primary structure comprises 448 residues: Protein odr-4 homolog (448 aa).

Helical transmembrane passes span 76-96 (ASQL…FLMT) and 428-448 (GLLI…YYII).

The protein belongs to the ODR-4 family.

The protein resides in the membrane. Its function is as follows. May play a role in the trafficking of a subset of G-protein coupled receptors. This chain is Protein odr-4 homolog (odr4), found in Xenopus tropicalis (Western clawed frog).